The chain runs to 77 residues: Acyl carrier protein (77 aa).

The region spanning 2–77 is the Carrier domain; the sequence is ADVLERVTKI…DAVTYIESHL (76 aa). An O-(pantetheine 4'-phosphoryl)serine modification is found at Ser-37.

The protein belongs to the acyl carrier protein (ACP) family. 4'-phosphopantetheine is transferred from CoA to a specific serine of apo-ACP by AcpS. This modification is essential for activity because fatty acids are bound in thioester linkage to the sulfhydryl of the prosthetic group.

It localises to the cytoplasm. Its pathway is lipid metabolism; fatty acid biosynthesis. Its function is as follows. Carrier of the growing fatty acid chain in fatty acid biosynthesis. This chain is Acyl carrier protein, found in Bacillus mycoides (strain KBAB4) (Bacillus weihenstephanensis).